We begin with the raw amino-acid sequence, 212 residues long: Regulator of G-protein signaling 2 (212 aa).

2 disordered regions span residues 11–33 (HDCGPMDKSAGTGPKSEEKREKM) and 48–69 (FLQNSSSPGKPKTGKKSKPQTF). The tract at residues 32–66 (KMKRTLLKDWKTRLSYFLQNSSSPGKPKTGKKSKP) is necessary for membrane association. Residues 79–116 (LWAEAFDELLASKYGLAAFRAFLKSEFCEENIEFWLAC) form a necessary to inhibit protein synthesis region. The RGS domain maps to 83-199 (AFDELLASKY…LESEFYQDLC (117 aa)).

As to quaternary structure, interacts with GNAQ. Does not interact with GNAI1 and GNAI3. Interacts with EIF2B5. Interacts with PRKG1 (isoform alpha). Phosphorylated by protein kinase C. Phosphorylation by PRKG1 leads to activation of RGS2 activity.

It is found in the cell membrane. The protein localises to the cytoplasm. The protein resides in the nucleus. It localises to the nucleolus. In terms of biological role, regulates G protein-coupled receptor signaling cascades. Inhibits signal transduction by increasing the GTPase activity of G protein alpha subunits, thereby driving them into their inactive GDP-bound form. It is involved in the negative regulation of the angiotensin-activated signaling pathway. Plays a role in the regulation of blood pressure in response to signaling via G protein-coupled receptors and GNAQ. Plays a role in regulating the constriction and relaxation of vascular smooth muscle. Binds EIF2B5 and blocks its activity, thereby inhibiting the translation of mRNA into protein. In Sus scrofa (Pig), this protein is Regulator of G-protein signaling 2 (RGS2).